A 193-amino-acid polypeptide reads, in one-letter code: Thymidine kinase (193 aa).

ATP is bound by residues 9–16 (STMNAGKS) and 87–90 (DEAQ). Residue glutamate 88 is the Proton acceptor of the active site. Cysteine 145, cysteine 147, cysteine 182, and histidine 185 together coordinate Zn(2+).

This sequence belongs to the thymidine kinase family. As to quaternary structure, homotetramer.

Its subcellular location is the cytoplasm. It carries out the reaction thymidine + ATP = dTMP + ADP + H(+). This chain is Thymidine kinase, found in Haemophilus influenzae (strain 86-028NP).